Consider the following 637-residue polypeptide: Tumor protein p73 (637 aa).

The transactivation stretch occupies residues 1-46 (MAQSTTTSPDGGTTFEHLWSSLEPDSTYFDLPQSSRGNNEVVGGTD). The residue at position 27 (threonine 27) is a Phosphothreonine. Tyrosine 28 carries the phosphotyrosine; by SRC and HCK modification. Residues 78-104 (RAASASPYTPEHAASVPTHSPYAQPSS) are disordered. A compositionally biased stretch (polar residues) spans 94 to 104 (PTHSPYAQPSS). At tyrosine 99 the chain carries Phosphotyrosine. A DNA-binding region spans residues 131 to 310 (FQQSSTAKSA…DRKADEDHYR (180 aa)). Positions 194, 197, 258, and 262 each coordinate Zn(2+). Basic and acidic residues predominate over residues 301-311 (DRKADEDHYRE). Residues 301–351 (DRKADEDHYREQQALNESSAKNGAASKRAFKQSPPAVPALGPGVKKRRHGD) are disordered. Positions 345–380 (KKRRHGDEDTYYLQVRGRENFEILMKLKESLELMEL) are interaction with HIPK2. The interval 345 to 386 (KKRRHGDEDTYYLQVRGRENFEILMKLKESLELMELVPQPLV) is oligomerization. Residues 483 to 487 (PPPPY) carry the PPxY motif motif. In terms of domain architecture, SAM spans 485-551 (PPYHADPSLV…WRGLQDLKQG (67 aa)). Lysine 628 is covalently cross-linked (Glycyl lysine isopeptide (Lys-Gly) (interchain with G-Cter in SUMO); in isoform Alpha). Lysine 628 is covalently cross-linked (Glycyl lysine isopeptide (Lys-Gly) (interchain with G-Cter in SUMO2)).

It belongs to the p53 family. Found in a complex with p53/TP53 and CABLES1. The C-terminal oligomerization domain binds to the ABL1 tyrosine kinase SH3 domain. Interacts with HECW2. Isoforms Alpha and Beta interact with HIPK2. Isoform Alpha interacts with RANBP9. Interacts with WWOX. Isoform Beta interacts homotypically and with p53, whereas isoform Alpha does not. Interacts (via SAM domain) with FBXO45 (via B30.2/SPRY domain). Interacts with YAP1 (phosphorylated form). Interacts with HCK (via SH3 domain); this inhibits TP73 activity and degradation. It depends on Zn(2+) as a cofactor. Isoform Alpha (but not isoform Beta) is sumoylated on Lys-628, which potentiates proteasomal degradation but does not affect transcriptional activity. Post-translationally, polyubiquitinated by RCHY1/PIRH2; leading to its degradation by the proteasome.

The protein localises to the nucleus. It localises to the cytoplasm. Its function is as follows. Participates in the apoptotic response to DNA damage. May be a tumor suppressor protein. Is an activator of FOXJ1 expression, essential for the positive regulation of lung ciliated cell differentiation. The polypeptide is Tumor protein p73 (TP73) (Chlorocebus aethiops (Green monkey)).